We begin with the raw amino-acid sequence, 324 residues long: Phospho-N-acetylmuramoyl-pentapeptide-transferase (324 aa).

10 helical membrane-spanning segments follow: residues 5–25 (VILFTAGLAFIITVVLSPIFI), 55–75 (GGLMILLSLSITTWLMSDIFF), 81–101 (TYMLLFVTVGYGLLGFIDDFI), 122–142 (LIALIFYFFFQHYSMSTVVSI), 147–167 (VSLDLGVAYVLLIIFMLVGGS), 176–196 (LDGLLAGTAAIAFGAYAVLAW), 203–223 (VAIFSVAVVGAVLGFLVFNAH), 227–247 (VFMGDTGSLALGGAIVTIAIL), 250–270 (LEILLVIIGGVFVIETLSVII), and 302–322 (VVVTFWAVGLLFAILGIYIEV).

Belongs to the glycosyltransferase 4 family. MraY subfamily. Requires Mg(2+) as cofactor.

It localises to the cell membrane. It catalyses the reaction UDP-N-acetyl-alpha-D-muramoyl-L-alanyl-gamma-D-glutamyl-meso-2,6-diaminopimeloyl-D-alanyl-D-alanine + di-trans,octa-cis-undecaprenyl phosphate = di-trans,octa-cis-undecaprenyl diphospho-N-acetyl-alpha-D-muramoyl-L-alanyl-D-glutamyl-meso-2,6-diaminopimeloyl-D-alanyl-D-alanine + UMP. It functions in the pathway cell wall biogenesis; peptidoglycan biosynthesis. Functionally, catalyzes the initial step of the lipid cycle reactions in the biosynthesis of the cell wall peptidoglycan: transfers peptidoglycan precursor phospho-MurNAc-pentapeptide from UDP-MurNAc-pentapeptide onto the lipid carrier undecaprenyl phosphate, yielding undecaprenyl-pyrophosphoryl-MurNAc-pentapeptide, known as lipid I. This chain is Phospho-N-acetylmuramoyl-pentapeptide-transferase, found in Anoxybacillus flavithermus (strain DSM 21510 / WK1).